Reading from the N-terminus, the 174-residue chain is WAP four-disulfide core domain protein 2 (174 aa).

The signal sequence occupies residues 1 to 25 (MPACRLCLLAAGLLLGLLLFTPISA). The WAP 1 domain occupies 29–74 (DAEKPGECPQLEPITDCVLECTLDKDCADNRKCCQAGCSSVCSKPN). Intrachain disulfides connect cysteine 36/cysteine 62, cysteine 45/cysteine 66, cysteine 49/cysteine 61, and cysteine 55/cysteine 70. Residues 68–117 (SVCSKPNGPSEGELSGTDTKLSETGTTTQSAGLDHTTKPPGGQVSTKPPA) are disordered. Residues 83-98 (GTDTKLSETGTTTQSA) are compositionally biased toward polar residues. In terms of domain architecture, WAP 2 spans 125-173 (VREKQGTCPSVDIPKLGLCEDQCQVDSQCSGNMKCCRNGCGKMACTTPK). 4 disulfide bridges follow: cysteine 132-cysteine 160, cysteine 143-cysteine 164, cysteine 147-cysteine 159, and cysteine 153-cysteine 169.

Homotrimer; disulfide-linked.

It is found in the secreted. Broad range protease inhibitor. This chain is WAP four-disulfide core domain protein 2 (Wfdc2), found in Mus musculus (Mouse).